The following is a 361-amino-acid chain: Hydroxycarboxylate dehydrogenase B (361 aa).

Residues histidine 48, 122–124 (GRI), 178–182 (LLDYA), histidine 234, asparagine 270, and 313–316 (GEWE) contribute to the NAD(+) site.

This sequence belongs to the LDH2/MDH2 oxidoreductase family.

It catalyses the reaction 2-hydroxyglutarate + NADP(+) = 2-oxoglutarate + NADPH + H(+). The enzyme catalyses 2-hydroxyglutarate + NAD(+) = 2-oxoglutarate + NADH + H(+). It carries out the reaction 3-phenyllactate + NADP(+) = 3-phenylpyruvate + NADPH + H(+). The catalysed reaction is 3-phenyllactate + NAD(+) = 3-phenylpyruvate + NADH + H(+). It catalyses the reaction (2R)-2-hydroxy-3-(4-hydroxyphenyl)propanoate + NAD(+) = 3-(4-hydroxyphenyl)pyruvate + NADH + H(+). The enzyme catalyses (2R)-2-hydroxy-3-(4-hydroxyphenyl)propanoate + NADP(+) = 3-(4-hydroxyphenyl)pyruvate + NADPH + H(+). It carries out the reaction (2R)-3-(3,4-dihydroxyphenyl)lactate + NADP(+) = 3-(3,4-dihydroxyphenyl)pyruvate + NADPH + H(+). The catalysed reaction is (2R)-3-(3,4-dihydroxyphenyl)lactate + NAD(+) = 3-(3,4-dihydroxyphenyl)pyruvate + NADH + H(+). Functionally, catalyzes the NAD(P)H-dependent reduction of 2-oxoglutarate, phenylpyruvate and (4-hydroxyphenyl)pyruvate, leading to the respective 2-hydroxycarboxylate in vitro. Shows a preference for NADPH over NADH as a redox partner. Do not catalyze the reverse reactions. This is Hydroxycarboxylate dehydrogenase B from Escherichia coli O157:H7.